The chain runs to 420 residues: Glucose-1-phosphate adenylyltransferase (420 aa).

Residues Tyr-107, Gly-172, 187 to 188 (EK), and Ser-205 contribute to the alpha-D-glucose 1-phosphate site.

The protein belongs to the bacterial/plant glucose-1-phosphate adenylyltransferase family. In terms of assembly, homotetramer.

It catalyses the reaction alpha-D-glucose 1-phosphate + ATP + H(+) = ADP-alpha-D-glucose + diphosphate. It functions in the pathway glycan biosynthesis; glycogen biosynthesis. In terms of biological role, involved in the biosynthesis of ADP-glucose, a building block required for the elongation reactions to produce glycogen. Catalyzes the reaction between ATP and alpha-D-glucose 1-phosphate (G1P) to produce pyrophosphate and ADP-Glc. This Rhodopseudomonas palustris (strain BisB18) protein is Glucose-1-phosphate adenylyltransferase.